The following is a 788-amino-acid chain: Pre-rRNA-processing protein TSR1 homolog (788 aa).

Positions 1 to 40 (MSTTGHRAGVFKKPAKPHKSWKGKRTKGEITTENRGREGV) are disordered. Residues 9–25 (GVFKKPAKPHKSWKGKR) are compositionally biased toward basic residues. Over residues 26–40 (TKGEITTENRGREGV) the composition is skewed to basic and acidic residues. Residues 83–243 (APCLVTILSL…LRTLNETKKK (161 aa)) form the Bms1-type G domain. The tract at residues 354–433 (LEEADKEMRR…ASEMMFHDEI (80 aa)) is disordered. Positions 378–412 (DDSEDDEDEEDEDEDMDDEEEDKDLEEDDEEEDTP) are enriched in acidic residues.

The protein belongs to the TRAFAC class translation factor GTPase superfamily. Bms1-like GTPase family. TSR1 subfamily.

Its subcellular location is the nucleus. The protein localises to the nucleolus. In terms of biological role, required during maturation of the 40S ribosomal subunit in the nucleolus. This chain is Pre-rRNA-processing protein TSR1 homolog, found in Caenorhabditis briggsae.